Here is a 75-residue protein sequence, read N- to C-terminus: Small ribosomal subunit protein bS18 (75 aa).

It belongs to the bacterial ribosomal protein bS18 family. Part of the 30S ribosomal subunit. Forms a tight heterodimer with protein bS6.

In terms of biological role, binds as a heterodimer with protein bS6 to the central domain of the 16S rRNA, where it helps stabilize the platform of the 30S subunit. The chain is Small ribosomal subunit protein bS18 from Sodalis glossinidius (strain morsitans).